The sequence spans 149 residues: Nucleoside diphosphate kinase 1 (149 aa).

Residues Lys9, Phe57, Arg85, Thr91, Arg102, and Asn112 each contribute to the ATP site. The active-site Pros-phosphohistidine intermediate is His115.

It belongs to the NDK family. Homohexamer. Mg(2+) is required as a cofactor.

It catalyses the reaction a 2'-deoxyribonucleoside 5'-diphosphate + ATP = a 2'-deoxyribonucleoside 5'-triphosphate + ADP. The enzyme catalyses a ribonucleoside 5'-diphosphate + ATP = a ribonucleoside 5'-triphosphate + ADP. Major role in the synthesis of nucleoside triphosphates other than ATP. The ATP gamma phosphate is transferred to the NDP beta phosphate via a ping-pong mechanism, using a phosphorylated active-site intermediate. This NDK is microtubule-associated. The sequence is that of Nucleoside diphosphate kinase 1 (NDKR) from Oryza sativa subsp. japonica (Rice).